The following is a 510-amino-acid chain: Putative serine protease K12H4.7 (510 aa).

The signal sequence occupies residues methionine 1–serine 19. Serine 187 functions as the Charge relay system in the catalytic mechanism. Asparagine 234 carries an N-linked (GlcNAc...) asparagine glycan. Catalysis depends on aspartate 452, which acts as the Charge relay system. N-linked (GlcNAc...) asparagine glycosylation occurs at asparagine 473. The active-site Charge relay system is the histidine 477.

Belongs to the peptidase S28 family.

The chain is Putative serine protease K12H4.7 from Caenorhabditis elegans.